The sequence spans 158 residues: Small ribosomal subunit protein uS9 (158 aa).

The span at 1-10 (MSDTMQSLDQ) shows a compositional bias: polar residues. The tract at residues 1–35 (MSDTMQSLDQLSALKTAAPDAPKREKKVDKQGRAY) is disordered. Basic and acidic residues predominate over residues 21 to 32 (APKREKKVDKQG).

Belongs to the universal ribosomal protein uS9 family.

The protein is Small ribosomal subunit protein uS9 of Afipia carboxidovorans (strain ATCC 49405 / DSM 1227 / KCTC 32145 / OM5) (Oligotropha carboxidovorans).